Consider the following 154-residue polypeptide: Small ribosomal subunit protein uS13m (154 aa).

Residues 1–30 (MLGLRRSATTLFDISQSLLRNVTFHGLRVQ) constitute a mitochondrion transit peptide. A disordered region spans residues 121 to 154 (RHGLPCRGQRTSTNARTKKGKAVAIAGKKKAPRK). Residues 136–154 (RTKKGKAVAIAGKKKAPRK) show a composition bias toward basic residues.

This sequence belongs to the universal ribosomal protein uS13 family. In terms of assembly, part of the small ribosomal subunit.

Its subcellular location is the mitochondrion. Its function is as follows. Located at the top of the head of the small subunit, it contacts several helices of the 18S rRNA. The chain is Small ribosomal subunit protein uS13m (RPS13) from Arabidopsis thaliana (Mouse-ear cress).